Here is a 126-residue protein sequence, read N- to C-terminus: Mating-type protein A1 (126 aa).

The segment at residues 70–126 (SPKGKSSISPQARAFLEQVFRRKQSLNSKEKEEVAKKCGITPLQVRVWFINKRMRSK) is a DNA-binding region (homeobox).

The protein belongs to the MATA1 family. As to quaternary structure, binds DNA with a high specificity as a heterodimer of A1 and ALPHA2.

The protein localises to the nucleus. Mating type proteins are sequence specific DNA-binding proteins that act as master switches in yeast differentiation by controlling gene expression in a cell type-specific fashion. Transcriptional corepressor that, in a/alpha diploid cells, binds cooperatively with the ALPHA2 protein to a 21-bp DNA sequence termed the haploid-specific gene (hsg) operator, to repress transcription of haploid-specific genes and of MATALPHA1. This is Mating-type protein A1 (MATA1) from Saccharomyces cerevisiae (Baker's yeast).